Here is a 649-residue protein sequence, read N- to C-terminus: Stress-70 protein, mitochondrial (649 aa).

Residues 1–46 constitute a mitochondrion transit peptide; it reads MISASRAAAARLVGAAASRGPTAARHKDGWNGLSHEAFRIVSRRDY. Positions 1 to 432 are interaction with NFS1; sequence MISASRAAAA…IQGGVLAGDV (432 aa). ADP contacts are provided by threonine 63 and asparagine 64. The nucleotide-binding domain (NBD) stretch occupies residues 63-431; the sequence is TNSCVAVMEG…AIQGGVLAGD (369 aa). Lysine 76 is subject to N6-acetyllysine. Phosphothreonine is present on threonine 87. Lysine 135 and lysine 138 each carry N6-acetyllysine; alternate. An N6-succinyllysine; alternate mark is found at lysine 135 and lysine 138. N6-acetyllysine is present on lysine 143. The residue at position 206 (lysine 206) is an N6-acetyllysine; alternate. An N6-succinyllysine; alternate modification is found at lysine 206. Lysine 206 bears the N6-malonyllysine; alternate mark. N6-acetyllysine is present on residues lysine 234 and lysine 288. Position 300 is an N6-acetyllysine; alternate (lysine 300). At lysine 300 the chain carries N6-succinyllysine; alternate. Glutamate 313, lysine 316, and serine 320 together coordinate ADP. Lysine 368 bears the N6-succinyllysine mark. ADP is bound by residues glycine 388 and arginine 391. An N6-succinyllysine modification is found at lysine 394. A Phosphoserine modification is found at serine 408. The segment at 432–441 is interdomain linker; sequence VTDVLLLDVT. Residues lysine 565, lysine 598, and lysine 638 each carry the N6-acetyllysine; alternate modification. N6-succinyllysine; alternate occurs at positions 565, 598, and 638.

It belongs to the heat shock protein 70 family. Interacts strongly with the intermediate form of FXN and weakly with its mature form. Interacts with HSCB. Associates with the mitochondrial contact site and cristae organizing system (MICOS) complex, composed of at least MICOS10/MIC10, CHCHD3/MIC19, CHCHD6/MIC25, APOOL/MIC27, IMMT/MIC60, APOO/MIC23/MIC26 and QIL1/MIC13. This complex was also known under the names MINOS or MitOS complex. The MICOS complex associates with mitochondrial outer membrane proteins SAMM50, MTX1, MTX2 and DNAJC11, mitochondrial inner membrane protein TMEM11 and with HSPA9. Interacts with DNLZ, the interaction is required to prevent self-aggregation. Interacts with TESPA1. Interacts with PDPN. Interacts with NFU1, NFS1 and ISCU. Interacts with TP53; the interaction promotes TP53 degradation. Interacts (via SBD domain) with UBXN2A; the interaction with UBXN2A inhibits HSPA9/MOT-2 interaction with and degradation of TP53, thereby promotes TP53 translocation to the nucleus. Interacts with ITPR1 AND VDAC1; this interaction couples ITPR1 to VDAC1. Component of the TIM23 mitochondrial inner membrane pre-sequence translocase complex.

The protein resides in the mitochondrion. It is found in the nucleus. It localises to the nucleolus. The protein localises to the cytoplasm. Its subcellular location is the mitochondrion matrix. The enzyme catalyses ATP + H2O = ADP + phosphate + H(+). Its activity is regulated as follows. The chaperone activity is regulated by ATP-induced allosteric coupling of the nucleotide-binding (NBD) and substrate-binding (SBD) domains. ATP binding in the NBD leads to a conformational change in the NBD, which is transferred through the interdomain linker (IDL) to the substrate-binding domain (SBD). This elicits a reduced substrate affinity and a faster substrate exchange rate. Upon hydrolysis of ATP to ADP, the protein undergoes a conformational change that increases its affinity for substrate proteins. It cycles through repeated phases of ATP hydrolysis and nucleotide exchange, facilitating repeated cycles of substrate binding and release. Functions in collaboration with co-chaperones. Functions with the co-chaperone, DNLZ, to maintain solubility and regulate ATP hydrolysis. Nucleotide exchange factors, GRPEL1 and GRPEL2, accelerate nucleotide exchange. In terms of biological role, mitochondrial chaperone that plays a key role in mitochondrial protein import, folding, and assembly. Plays an essential role in the protein quality control system, the correct folding of proteins, the re-folding of misfolded proteins, and the targeting of proteins for subsequent degradation. These processes are achieved through cycles of ATP binding, ATP hydrolysis, and ADP release, mediated by co-chaperones. In mitochondria, it associates with the TIM (translocase of the inner membrane) protein complex to assist in the import and folding of mitochondrial proteins. Plays an important role in mitochondrial iron-sulfur cluster (ISC) biogenesis, interacts with and stabilizes ISC cluster assembly proteins FXN, NFU1, NFS1 and ISCU. Regulates erythropoiesis via stabilization of ISC assembly. Regulates mitochondrial calcium-dependent apoptosis by coupling two calcium channels, ITPR1 and VDAC1, at the mitochondria-associated endoplasmic reticulum (ER) membrane to facilitate calcium transport from the ER lumen to the mitochondria intermembrane space, providing calcium for the downstream calcium channel MCU, which releases it into the mitochondrial matrix. Although primarily located in the mitochondria, it is also found in other cellular compartments. In the cytosol, it associates with proteins involved in signaling, apoptosis, or senescence. It may play a role in cell cycle regulation via its interaction with and promotion of degradation of TP53. May play a role in the control of cell proliferation and cellular aging. Protects against reactive oxygen species (ROS). Extracellular HSPA9 plays a cytoprotective role by preventing cell lysis following immune attack by the membrane attack complex by disrupting formation of the complex. The protein is Stress-70 protein, mitochondrial of Canis lupus familiaris (Dog).